A 436-amino-acid polypeptide reads, in one-letter code: MTKPIVAIVGRPNVGKSTIFNRVVGERVSIVEDTPGVTRDRIYSSGEWLTHDFNIIDTGGIEIGDAPFQTQIRAQAEVAIDEADVIIFMVNVREGLTQSDEMVAQMLYKSKKPVVLAVNKVDNPEMRNEIYDFYSLGFGDPYPISGSHGLGLGDLLDAVVKHFKEEEPDPYDDDTIRLSIIGRPNVGKSSLVNAILGEDRVIVSNVAGTTRDAVDTEYSYDDQDYVLIDTAGMRKKGKVYENTEKYSVLRALKAIERSNVILIVIDAEQGIIEQDKRVAGYAHEEGKAIVIVVNKWDTVDKETNTMKKFKDEVRKEFQFLDYAEIAFVSAKEKQRLRTLFPYIKEASENHKKRVQSSTLNEVVTDAISMNPTPTDKGRRLNVFYATQVAIEPPTFIVFVNDVELMHFSYKRYLENQIRAAFGFEGTPVHIIARKRN.

EngA-type G domains follow at residues 4–167 and 176–351; these read PIVA…KEEE and IRLS…ENHK. GTP is bound by residues 10-17, 57-61, 119-122, 182-189, 229-233, and 294-297; these read GRPNVGKS, DTGGI, NKVD, DTAGM, and NKWD. In terms of domain architecture, KH-like spans 352–436; that stretch reads KRVQSSTLNE…PVHIIARKRN (85 aa).

This sequence belongs to the TRAFAC class TrmE-Era-EngA-EngB-Septin-like GTPase superfamily. EngA (Der) GTPase family. As to quaternary structure, associates with the 50S ribosomal subunit.

GTPase that plays an essential role in the late steps of ribosome biogenesis. This chain is GTPase Der, found in Staphylococcus saprophyticus subsp. saprophyticus (strain ATCC 15305 / DSM 20229 / NCIMB 8711 / NCTC 7292 / S-41).